A 332-amino-acid chain; its full sequence is Adenosine deaminase (332 aa).

The Zn(2+) site is built by His-12 and His-14. Residues His-14, Asp-16, and Gly-170 each coordinate substrate. His-197 serves as a coordination point for Zn(2+). Catalysis depends on Glu-200, which acts as the Proton donor. Asp-278 is a Zn(2+) binding site. Asp-279 provides a ligand contact to substrate.

This sequence belongs to the metallo-dependent hydrolases superfamily. Adenosine and AMP deaminases family. Adenosine deaminase subfamily. Zn(2+) serves as cofactor.

The enzyme catalyses adenosine + H2O + H(+) = inosine + NH4(+). It carries out the reaction 2'-deoxyadenosine + H2O + H(+) = 2'-deoxyinosine + NH4(+). Catalyzes the hydrolytic deamination of adenosine and 2-deoxyadenosine. This Yersinia enterocolitica serotype O:8 / biotype 1B (strain NCTC 13174 / 8081) protein is Adenosine deaminase.